Here is a 426-residue protein sequence, read N- to C-terminus: Divalent metal cation transporter MntH (426 aa).

10 helical membrane passes run 31–51 (WYLL…GNVA), 58–78 (AQFG…AGLV), 134–156 (ILFR…LLLM), 169–189 (VITG…FVAT), 208–228 (SVLL…VYLH), 256–276 (VILA…VAAI), 298–318 (LGAT…LASA), 337–357 (IPML…LALG), 363–383 (ALVL…LPLV), and 402–422 (TVLG…LIYL).

Belongs to the NRAMP family.

It is found in the cell membrane. Its function is as follows. H(+)-stimulated, divalent metal cation uptake system. This Mycobacterium leprae (strain TN) protein is Divalent metal cation transporter MntH.